A 190-amino-acid polypeptide reads, in one-letter code: MAGERERGGGHRGPREERDSEFVDKLVHINRVAKVVKGGKRFGFAALVVIGDQKGRVGFGHGKAREVPEAIRKATESAKRNLTRVPLREGRTLHHDIAGRHGAGRVYLRAAPAGTGIIAGGPMRAVFETLGIQDVVAKSIGSSNPYNMVRATFDALKHQDSPRSVAARRNLKVSTLQSRRVGGDAEVVAE.

Positions 22–85 (FVDKLVHINR…ESAKRNLTRV (64 aa)) constitute an S5 DRBM domain.

It belongs to the universal ribosomal protein uS5 family. Part of the 30S ribosomal subunit. Contacts proteins S4 and S8.

With S4 and S12 plays an important role in translational accuracy. Functionally, located at the back of the 30S subunit body where it stabilizes the conformation of the head with respect to the body. The sequence is that of Small ribosomal subunit protein uS5 from Rhodopseudomonas palustris (strain BisB18).